Consider the following 211-residue polypeptide: PITH domain-containing protein GA19395 (211 aa).

The 173-residue stretch at 20-192 (DHALEMGIEY…GVTICNYEAR (173 aa)) folds into the PITH domain.

It belongs to the PITHD1 family.

The protein is PITH domain-containing protein GA19395 of Drosophila pseudoobscura pseudoobscura (Fruit fly).